A 307-amino-acid polypeptide reads, in one-letter code: MEQNQNEEFLVYEFDQINVNADQQEVDLDDQSVVLSTYEFPSFYDMAVDAISKDFNSTHLIMEELDGVNVIYDIFDSEALEKWLDIDTYFELKPFPIERFELFNRLLLHQFQTLAYNRPRASWSTLRNQATQSVIEGFEDEFSDLPIQGMHNESWECLAPELRICFMFRSFKIKPSILLQVSRILAGSLMFPGLNLIGKKSLLDMFNNYNVIEYLDHYFPTSKYDSDEYLKFIRFDLVPDEWKLIVVKHEFENSFRFLNVHGKTEEKPYHKAMRGPPPDQWYTLLRRKFIFRSLKYTKRLIRNLLDY.

This is an uncharacterized protein from Saccharum officinarum (Sugarcane).